The following is a 1643-amino-acid chain: Neurexin-3 (1643 aa).

An N-terminal signal peptide occupies residues 1-27 (MSSTLHSVFFTLKVSILLGSLLGLCLG). A Laminin G-like 1 domain is found at 28 to 202 (LEFMGLPNQW…GVQMDAEGPC (175 aa)). Over 28 to 1568 (LEFMGLPNQW…EVIRESSSTT (1541 aa)) the chain is Extracellular. N-linked (GlcNAc...) asparagine glycosylation is found at Asn-58 and Asn-105. In terms of domain architecture, EGF-like 1 spans 198-235 (AEGPCGERPCENGGICFLLDGHPTCDCSTTGYGGKLCS). 3 disulfide bridges follow: Cys-202-Cys-213, Cys-207-Cys-222, and Cys-224-Cys-234. 2 consecutive Laminin G-like domains span residues 258 to 440 (VATF…VFKC) and 447 to 639 (DPIN…KSSC). Residues Asp-304, Leu-321, and Met-374 each coordinate Ca(2+). 5 disulfides stabilise this stretch: Cys-404–Cys-440, Cys-610–Cys-639, Cys-647–Cys-658, Cys-652–Cys-667, and Cys-669–Cys-679. The region spanning 643–680 (SAKQCDSYPCKNNAVCKDGWNRFICDCTGTGYWGRTCE) is the EGF-like 2 domain. 2 Laminin G-like domains span residues 685–857 (ILSY…IDYC) and 871–1046 (DPVT…ERGC). Ca(2+) contacts are provided by Asp-732 and Leu-749. N-linked (GlcNAc...) asparagine glycosylation occurs at Asn-757. Arg-807 is a Ca(2+) binding site. Intrachain disulfides connect Cys-1018–Cys-1046, Cys-1053–Cys-1064, Cys-1058–Cys-1073, and Cys-1075–Cys-1085. The 38-residue stretch at 1049–1086 (PSTTCQEDSCANQGVCMQQWEGFTCDCSMTSYSGNQCN) folds into the EGF-like 3 domain. In terms of domain architecture, Laminin G-like 6 spans 1090–1260 (ATYIFGKSGG…NPNIKINGSV (171 aa)). Ca(2+)-binding residues include Asp-1142 and Ile-1159. An N-linked (GlcNAc...) asparagine glycan is attached at Asn-1189. Ile-1211 and Asn-1213 together coordinate Ca(2+). N-linked (GlcNAc...) asparagine glycans are attached at residues Asn-1257 and Asn-1301. Residues 1294-1318 (ATTTTRKNRSTASIQPTSDDLVSSA) are disordered. Positions 1303–1318 (STASIQPTSDDLVSSA) are enriched in polar residues. Residue Ser-1317 is glycosylated (O-linked (Xyl...) (heparan sulfate) serine). A helical membrane pass occupies residues 1569 to 1589 (GMVVGIVAAAALCILILLYAM). Over 1590-1643 (YKYRNRDEGSYQVDETRNYISNSAQSNGTLMKEKQQSSKSGHKKQKNKDREYYV) the chain is Cytoplasmic. Residues 1611–1643 (NSAQSNGTLMKEKQQSSKSGHKKQKNKDREYYV) are disordered.

The protein belongs to the neurexin family. In terms of assembly, the laminin G-like domain 2 binds to NXPH1. Specific isoforms bind to alpha-dystroglycan. The cytoplasmic C-terminal region binds to CASK. Specific isoforms bind neuroligins NLGN1, NLGN2 and NLGN3. Interacts with CLSTN3. O-glycosylated; contains heparan sulfate. Heparan sulfate attachment is required for synapse development by mediating interactions with neuroligins. In terms of tissue distribution, expressed in the blood vessel walls (at protein level). Highly expressed in brain, lung, and pancreas; a lower level of expression is detectable in heart, placenta, liver, and kidney, whereas no expression can be observed in skeletal muscle. Isoform 4a is heart-specific.

The protein localises to the presynaptic cell membrane. In terms of biological role, neuronal cell surface protein that may be involved in cell recognition and cell adhesion. May mediate intracellular signaling. The protein is Neurexin-3 (NRXN3) of Homo sapiens (Human).